Here is a 771-residue protein sequence, read N- to C-terminus: Rho GTPase-activating protein 26 (771 aa).

Residues 7–262 enclose the BAR domain; it reads EFSDCYLDSP…MKENPHEHLA (256 aa). Positions 265–369 constitute a PH domain; the sequence is PFTMEGYLYV…WMEAMDGREP (105 aa). The Rho-GAP domain occupies 383–568; that stretch reads AQLDNIGFSI…IIIENYEEMF (186 aa). Positions 575–712 are disordered; the sequence is PQTNSQLHLS…SSTSSDSSPV (138 aa). Over residues 608 to 617 the composition is skewed to basic and acidic residues; sequence HSSEKEEKRN. Residues 618–637 are compositionally biased toward low complexity; the sequence is SVNSSAESVSSSNANSSVNS. 2 stretches are compositionally biased toward polar residues: residues 638-650 and 662-671; these read TCTQRSNMNNLNA and RPNSLLNPKN. Low complexity-rich tracts occupy residues 673–683 and 691–712; these read SGLLPSSLNPS and PMVSAPSSPMPTSSTSSDSSPV. One can recognise an SH3 domain in the interval 713–771; it reads SVPRKAKALYACKAEHDSELSFSAGTVFENVCPSQEPGWLEGTLNGKTGLIPENYVEFL.

It localises to the cell junction. The protein localises to the focal adhesion. The protein resides in the cytoplasm. Its subcellular location is the cytoskeleton. It is found in the endosome membrane. In terms of biological role, GTPase-activating protein for rhoa and cdc42. May be involved in the regulation of neosynthesized protein export through a Rab-endososomal dependent export route. The sequence is that of Rho GTPase-activating protein 26 (arhgap26) from Xenopus laevis (African clawed frog).